The sequence spans 180 residues: Ribosome maturation factor RimM (180 aa).

The 73-residue stretch at 97-169 (PGELSWDFFV…IITVDLPEGL (73 aa)) folds into the PRC barrel domain.

This sequence belongs to the RimM family. Binds ribosomal protein uS19.

It localises to the cytoplasm. An accessory protein needed during the final step in the assembly of 30S ribosomal subunit, possibly for assembly of the head region. Essential for efficient processing of 16S rRNA. May be needed both before and after RbfA during the maturation of 16S rRNA. It has affinity for free ribosomal 30S subunits but not for 70S ribosomes. This Bacteroides fragilis (strain YCH46) protein is Ribosome maturation factor RimM.